Consider the following 335-residue polypeptide: G-protein coupled receptor 157 (335 aa).

Residues 1-15 (MQPSPPPTELVPSER) lie on the Extracellular side of the membrane. A helical transmembrane segment spans residues 16–36 (AVVLLSCALSALGSGLLVATH). Topologically, residues 37–48 (ALWPDLRSRARR) are cytoplasmic. The helical transmembrane segment at 49–69 (LLLFLSLADLLSAASYFYGVL) threads the bilayer. Residues 70–87 (QNFAGPSWDCVLQGALST) lie on the Extracellular side of the membrane. Residues 88-108 (FANTSSFFWTVAIALYLYLSI) form a helical membrane-spanning segment. Over 109–119 (VRAARGPRTDR) the chain is Cytoplasmic. Residues 120-140 (LLWAFHVVSWGVPLVITVAAV) traverse the membrane as a helical segment. Over 141–166 (ALKKIGYDASDVSVGWCWIDLEAKDH) the chain is Extracellular. Residues 167–187 (VLWMLLTGKLWEMLAYVLLPL) traverse the membrane as a helical segment. Topologically, residues 188-226 (LYLLVRKHINRAHTALSEYRPILSQEHRLLRHSSMADKK) are cytoplasmic. The chain crosses the membrane as a helical span at residues 227–247 (LVLIPLIFIGLRVWSTVRFVL). Residues 248–258 (TLCGSPAVQTP) lie on the Extracellular side of the membrane. The helical transmembrane segment at 259 to 279 (VLVVLHGIGNTFQGGANCIMF) threads the bilayer. Residues 280–335 (VLCTRAVRTRLFSLCCCCCSSQPPTKSPAGTPKAPAPSKPGESQESQGTPGELPST) lie on the Cytoplasmic side of the membrane. Residues 300-335 (SQPPTKSPAGTPKAPAPSKPGESQESQGTPGELPST) are disordered. Polar residues predominate over residues 320–335 (GESQESQGTPGELPST).

The protein belongs to the G-protein coupled receptor 2 family.

The protein localises to the cell projection. It localises to the cilium membrane. Its function is as follows. Orphan receptor that promotes neuronal differentiation of radial glial progenitors (RGPs). The activity of this receptor is mediated by a G(q)-protein that activates a phosphatidylinositol-calcium second messenger. This is G-protein coupled receptor 157 (GPR157) from Homo sapiens (Human).